We begin with the raw amino-acid sequence, 78 residues long: Large ribosomal subunit protein bL31 (78 aa).

Cys-16, Cys-18, Cys-38, and Cys-41 together coordinate Zn(2+).

It belongs to the bacterial ribosomal protein bL31 family. Type A subfamily. In terms of assembly, part of the 50S ribosomal subunit. Zn(2+) serves as cofactor.

Binds the 23S rRNA. The protein is Large ribosomal subunit protein bL31 of Frankia casuarinae (strain DSM 45818 / CECT 9043 / HFP020203 / CcI3).